Consider the following 149-residue polypeptide: MRRLKMEENKIFFDSNILIYHLCGKVEAKKLIEKVENKEICGFINPIVISEVLFFYIRATTNKRHYDIKKHPEILKSLDLDIVFELFSIFQILDLNSEIVKISREIIKKYCLLPNDALICSTCKFYKINKICSFDDDFKRVDFLEIIEI.

Positions 11–149 constitute a PINc domain; sequence IFFDSNILIY…RVDFLEIIEI (139 aa). Residues Asp-14 and Asp-116 each coordinate Mg(2+).

Belongs to the PINc/VapC protein family. Mg(2+) is required as a cofactor.

In terms of biological role, toxic component of a type II toxin-antitoxin (TA) system. An RNase. Its cognate antitoxin is VapB2. In Methanocaldococcus jannaschii (strain ATCC 43067 / DSM 2661 / JAL-1 / JCM 10045 / NBRC 100440) (Methanococcus jannaschii), this protein is Ribonuclease VapC2.